Reading from the N-terminus, the 235-residue chain is Iron-sulfur cluster co-chaperone protein HscB (235 aa).

4 residues coordinate a divalent metal cation: Cys41, Cys44, Cys58, and Cys61. The region spanning Asp72–Leu144 is the J domain.

This sequence belongs to the HscB family. Interacts with ISCU and HSPA9 to form an iron-sulfur transfer complex. Interacts with SDHAF1 (via the first LYR motif); the interaction recruits the iron-sulfur transfer complex composed of HSC20, HSPA9 and ISCU and mediates the incorporation of iron-sulfur clusters into SDHB which also interacts with HSC20. Interacts with the cytoplasmic form of ISCU and with CIA complex member CIAO1 (via LYR motif). As to quaternary structure, homodimer. Interacts with ISCU (cytoplasmic form); this interaction stabilizes the (Fe-S) clusters on ISCU. Interacts with the CIA complex member CIAO1 (via LYR motif). In terms of tissue distribution, expressed in lung, brain, stomach, spleen, ovary, testis, liver, muscle and heart.

It is found in the cytoplasm. Its subcellular location is the mitochondrion. Its pathway is cofactor biosynthesis; iron-sulfur cluster biosynthesis. Acts as a co-chaperone in iron-sulfur cluster assembly in mitochondria. Required for incorporation of iron-sulfur clusters into SDHB, the iron-sulfur protein subunit of succinate dehydrogenase that is involved in complex II of the mitochondrial electron transport chain. Recruited to SDHB by interaction with SDHAF1 which first binds SDHB and then recruits the iron-sulfur transfer complex formed by HSC20, HSPA9 and ISCU through direct binding to HSC20. Plays an essential role in hematopoiesis. In terms of biological role, acts as a co-chaperone in iron-sulfur cluster assembly in the cytoplasm. Also mediates complex formation between components of the cytosolic iron-sulfur biogenesis pathway and the CIA targeting complex composed of CIAO1, DIPK1B/FAM69B and MMS19 by binding directly to the scaffold protein ISCU and to CIAO1. This facilitates iron-sulfur cluster insertion into a number of cytoplasmic and nuclear proteins including POLD1, ELP3, DPYD and PPAT. The polypeptide is Iron-sulfur cluster co-chaperone protein HscB (Homo sapiens (Human)).